The following is a 208-amino-acid chain: Imidazoleglycerol-phosphate dehydratase (208 aa).

This sequence belongs to the imidazoleglycerol-phosphate dehydratase family.

It localises to the cytoplasm. The catalysed reaction is D-erythro-1-(imidazol-4-yl)glycerol 3-phosphate = 3-(imidazol-4-yl)-2-oxopropyl phosphate + H2O. It functions in the pathway amino-acid biosynthesis; L-histidine biosynthesis; L-histidine from 5-phospho-alpha-D-ribose 1-diphosphate: step 6/9. The sequence is that of Imidazoleglycerol-phosphate dehydratase from Pseudarthrobacter chlorophenolicus (strain ATCC 700700 / DSM 12829 / CIP 107037 / JCM 12360 / KCTC 9906 / NCIMB 13794 / A6) (Arthrobacter chlorophenolicus).